A 70-amino-acid polypeptide reads, in one-letter code: U2-agatoxin-Ao1q (70 aa).

The first 20 residues, Met1–Ala20, serve as a signal peptide directing secretion. The propeptide occupies Val21 to Arg34. 2 disulfide bridges follow: Cys44–Cys58 and Cys52–Cys68. A Leucine amide modification is found at Leu69.

The protein belongs to the neurotoxin 01 (U2-agtx) family. In terms of processing, does not contain a cysteine at position 53 which disrupts the cysteine framework. As to expression, expressed by the venom gland.

Its subcellular location is the secreted. Its function is as follows. Insect active toxin causing rapid but reversible paralysis in crickets. No activity shown in mammals. Does not show effect on mammalian voltage-gated calcium channels. This chain is U2-agatoxin-Ao1q, found in Agelena orientalis (Funnel-web spider).